A 378-amino-acid chain; its full sequence is Erythronate-4-phosphate dehydrogenase (378 aa).

Positions 45 and 66 each coordinate substrate. NAD(+) contacts are provided by aspartate 146 and threonine 175. Arginine 208 is an active-site residue. Aspartate 232 serves as a coordination point for NAD(+). The active site involves glutamate 237. Catalysis depends on histidine 254, which acts as the Proton donor. Glycine 257 is an NAD(+) binding site. Substrate is bound at residue tyrosine 258.

The protein belongs to the D-isomer specific 2-hydroxyacid dehydrogenase family. PdxB subfamily. Homodimer.

The protein resides in the cytoplasm. The enzyme catalyses 4-phospho-D-erythronate + NAD(+) = (R)-3-hydroxy-2-oxo-4-phosphooxybutanoate + NADH + H(+). The protein operates within cofactor biosynthesis; pyridoxine 5'-phosphate biosynthesis; pyridoxine 5'-phosphate from D-erythrose 4-phosphate: step 2/5. Its function is as follows. Catalyzes the oxidation of erythronate-4-phosphate to 3-hydroxy-2-oxo-4-phosphonooxybutanoate. This is Erythronate-4-phosphate dehydrogenase from Escherichia coli O139:H28 (strain E24377A / ETEC).